A 118-amino-acid polypeptide reads, in one-letter code: V-type proton ATPase subunit G 2 (118 aa).

Residues 8 to 57 adopt a coiled-coil conformation; sequence IQQLLQAEKRAAEKVADARKRKARRLKQAKEEAQMEVDQYRREREQEFQS. The tract at residues 25 to 90 is disordered; sequence ARKRKARRLK…VQGMQSSQQR (66 aa). A compositionally biased stretch (basic and acidic residues) spans 35-55; it reads QAKEEAQMEVDQYRREREQEF. 2 stretches are compositionally biased toward polar residues: residues 56–69 and 78–89; these read QSKQ…QGNL and RRQVQGMQSSQQ.

The protein belongs to the V-ATPase G subunit family. In terms of assembly, V-ATPase is a heteromultimeric enzyme made up of two complexes: the ATP-hydrolytic V1 complex and the proton translocation V0 complex. The V1 complex consists of three catalytic AB heterodimers that form a heterohexamer, three peripheral stalks each consisting of EG heterodimers, one central rotor including subunits D and F, and the regulatory subunits C and H. The proton translocation complex V0 consists of the proton transport subunit a, a ring of proteolipid subunits c9c'', rotary subunit d, subunits e and f, and the accessory subunits ATP6AP1/Ac45 and ATP6AP2/PRR. As to expression, expressed in brain (at protein level).

Its subcellular location is the melanosome. It localises to the cytoplasmic vesicle. The protein resides in the clathrin-coated vesicle membrane. Subunit of the V1 complex of vacuolar(H+)-ATPase (V-ATPase), a multisubunit enzyme composed of a peripheral complex (V1) that hydrolyzes ATP and a membrane integral complex (V0) that translocates protons. V-ATPase is responsible for acidifying and maintaining the pH of intracellular compartments and in some cell types, is targeted to the plasma membrane, where it is responsible for acidifying the extracellular environment. This is V-type proton ATPase subunit G 2 from Bos taurus (Bovine).